The following is a 611-amino-acid chain: POU domain, class 6, transcription factor 1 (611 aa).

Positions 62-93 (ASQAAGEAGPDNLGSSAEATVKSPPGIPPSPA) are disordered. A POU-specific domain is found at 449 to 523 (EDGINLEEIR…VLEKWLNEAE (75 aa)). Positions 544 to 603 (KRKRRTSFTPQAIEALNAYFEKNPLPTGQEITEIAKELNYDREVVRVWFCNRRQTLKNTS) form a DNA-binding region, homeobox.

It belongs to the POU transcription factor family. Class-6 subfamily. In the embryo, expressed exclusively in the developing brain, whereas in the adult its expression is restricted to brain, heart, skeletal muscle and lung. In the brain, the highest expression levels are found in specific cell layers of the cortex, the olfactory bulb, the hippocampus and the cerebellum.

The protein resides in the nucleus. Its function is as follows. Transcription factor that binds preferentially to a variant of the octamer motif (5'-ATGATAAT-3'). The chain is POU domain, class 6, transcription factor 1 (POU6F1) from Homo sapiens (Human).